The chain runs to 765 residues: 5-methyltetrahydropteroyltriglutamate--homocysteine methyltransferase (765 aa).

5-methyltetrahydropteroyltri-L-glutamate-binding positions include 18–21 and lysine 114; that span reads REWK. Residues 437–439 and glutamate 490 contribute to the L-homocysteine site; that span reads IGS. L-methionine is bound by residues 437–439 and glutamate 490; that span reads IGS. Position 567 (tryptophan 567) interacts with 5-methyltetrahydropteroyltri-L-glutamate. Position 605 (aspartate 605) interacts with L-homocysteine. Residue aspartate 605 coordinates L-methionine. Glutamate 611 lines the 5-methyltetrahydropteroyltri-L-glutamate pocket. Zn(2+) is bound by residues histidine 647, cysteine 649, and glutamate 671. Histidine 700 serves as the catalytic Proton donor. Cysteine 732 lines the Zn(2+) pocket.

This sequence belongs to the vitamin-B12 independent methionine synthase family. Requires Zn(2+) as cofactor.

It carries out the reaction 5-methyltetrahydropteroyltri-L-glutamate + L-homocysteine = tetrahydropteroyltri-L-glutamate + L-methionine. It functions in the pathway amino-acid biosynthesis; L-methionine biosynthesis via de novo pathway; L-methionine from L-homocysteine (MetE route): step 1/1. In terms of biological role, catalyzes the transfer of a methyl group from 5-methyltetrahydrofolate to homocysteine resulting in methionine formation. The sequence is that of 5-methyltetrahydropteroyltriglutamate--homocysteine methyltransferase from Listeria welshimeri serovar 6b (strain ATCC 35897 / DSM 20650 / CCUG 15529 / CIP 8149 / NCTC 11857 / SLCC 5334 / V8).